The chain runs to 276 residues: Sulfur carrier protein FdhD (276 aa).

Cys-120 acts as the Cysteine persulfide intermediate in catalysis.

Belongs to the FdhD family.

It localises to the cytoplasm. Its function is as follows. Required for formate dehydrogenase (FDH) activity. Acts as a sulfur carrier protein that transfers sulfur from IscS to the molybdenum cofactor prior to its insertion into FDH. The chain is Sulfur carrier protein FdhD from Bordetella parapertussis (strain 12822 / ATCC BAA-587 / NCTC 13253).